Reading from the N-terminus, the 233-residue chain is Large ribosomal subunit protein uL1 (233 aa).

This sequence belongs to the universal ribosomal protein uL1 family. In terms of assembly, part of the 50S ribosomal subunit.

Binds directly to 23S rRNA. The L1 stalk is quite mobile in the ribosome, and is involved in E site tRNA release. In terms of biological role, protein L1 is also a translational repressor protein, it controls the translation of the L11 operon by binding to its mRNA. This is Large ribosomal subunit protein uL1 from Geotalea daltonii (strain DSM 22248 / JCM 15807 / FRC-32) (Geobacter daltonii).